The sequence spans 241 residues: Uridylate kinase (241 aa).

ATP is bound at residue 15–18 (KLSG). Residue Gly-57 participates in UMP binding. 2 residues coordinate ATP: Gly-58 and Arg-62. UMP-binding positions include Asp-77 and 139–146 (IGHTLFTT). Thr-166, Asn-167, Phe-172, and Asp-175 together coordinate ATP.

The protein belongs to the UMP kinase family. As to quaternary structure, homohexamer.

It localises to the cytoplasm. The catalysed reaction is UMP + ATP = UDP + ADP. The protein operates within pyrimidine metabolism; CTP biosynthesis via de novo pathway; UDP from UMP (UMPK route): step 1/1. With respect to regulation, inhibited by UTP. Catalyzes the reversible phosphorylation of UMP to UDP. This Wigglesworthia glossinidia brevipalpis protein is Uridylate kinase.